A 398-amino-acid polypeptide reads, in one-letter code: O-methyltransferase aoiO (398 aa).

Position 251 (D251) interacts with S-adenosyl-L-methionine. H299 serves as the catalytic Proton acceptor.

This sequence belongs to the class I-like SAM-binding methyltransferase superfamily. Cation-independent O-methyltransferase family.

In terms of biological role, O-methyltransferase; part of the gene cluster that mediates the biosynthesis of a methylated derivative of known natural products orthosporin and diaporthin. Seems not to be involved in the biosynthesis of the identified final product of the pathway and its function has still to be determined. This is O-methyltransferase aoiO from Aspergillus oryzae (strain ATCC 42149 / RIB 40) (Yellow koji mold).